The primary structure comprises 630 residues: Glutathione hydrolase proenzyme 1 (630 aa).

Residues 1 to 49 lie on the Cytoplasmic side of the membrane; the sequence is MGINTSSAQSSGAASIARSSVNVKSGNRHLSSNKKSATSALEERASRPS. A helical; Signal-anchor for type II membrane protein transmembrane segment spans residues 50 to 70; that stretch reads ILVTFLVLAGTILSLYIWPIL. Residues 71–630 are Lumenal-facing; sequence SPDLFFANQR…SRKQAVAAAY (560 aa). Asn156 is a glycosylation site (N-linked (GlcNAc...) asparagine). Arg165 contributes to the L-glutamate binding site. N-linked (GlcNAc...) asparagine glycosylation is found at Asn180, Asn315, Asn397, and Asn417. Catalysis depends on Thr441, which acts as the Nucleophile. L-glutamate-binding positions include Ser459, Asn461, Asp483, 511–512, and 532–533; these read SS and GG. The N-linked (GlcNAc...) asparagine glycan is linked to Asn612.

The protein belongs to the gamma-glutamyltransferase family. As to quaternary structure, heterodimer composed of the light and heavy chains. The active site is located in the light chain. Cleaved by autocatalysis into a large and a small subunit.

The protein localises to the endoplasmic reticulum membrane. It catalyses the reaction an N-terminal (5-L-glutamyl)-[peptide] + an alpha-amino acid = 5-L-glutamyl amino acid + an N-terminal L-alpha-aminoacyl-[peptide]. The catalysed reaction is glutathione + H2O = L-cysteinylglycine + L-glutamate. The enzyme catalyses an S-substituted glutathione + H2O = an S-substituted L-cysteinylglycine + L-glutamate. The protein operates within sulfur metabolism; glutathione metabolism. Its function is as follows. Catalyzes the transfer of the gamma-glutamyl moiety of glutathione (GSH) and other gamma-glutamyl compounds to amino acids and peptides. Major GSH-degrading enzyme, catalyzing the hydrolytic release of L-glutamate from GSH. The protein is Glutathione hydrolase proenzyme 1 (ggt1) of Schizosaccharomyces pombe (strain 972 / ATCC 24843) (Fission yeast).